The primary structure comprises 583 residues: CTP synthase (583 aa).

The amidoligase domain stretch occupies residues 1–278 (MRRHPQTATK…DAFVVRRLNL (278 aa)). Ser20 lines the CTP pocket. A UTP-binding site is contributed by Ser20. ATP-binding positions include 21–26 (SLGKGL) and Asp78. Residues Asp78 and Glu152 each contribute to the Mg(2+) site. CTP is bound by residues 159–161 (DIE), 199–204 (KTKPTQ), and Lys235. UTP-binding positions include 199 to 204 (KTKPTQ) and Lys235. One can recognise a Glutamine amidotransferase type-1 domain in the interval 303-551 (RIALVGKYVE…VKAAIDYKEG (249 aa)). Residue Gly366 coordinates L-glutamine. Residue Cys393 is the Nucleophile; for glutamine hydrolysis of the active site. L-glutamine is bound by residues 394–397 (LGLQ), Glu416, and Arg477. Catalysis depends on residues His524 and Glu526. The segment at 559–583 (PERVSNGAERRDQVGQSIPEPANRG) is disordered.

It belongs to the CTP synthase family. Homotetramer.

It catalyses the reaction UTP + L-glutamine + ATP + H2O = CTP + L-glutamate + ADP + phosphate + 2 H(+). It carries out the reaction L-glutamine + H2O = L-glutamate + NH4(+). The catalysed reaction is UTP + NH4(+) + ATP = CTP + ADP + phosphate + 2 H(+). The protein operates within pyrimidine metabolism; CTP biosynthesis via de novo pathway; CTP from UDP: step 2/2. Its activity is regulated as follows. Allosterically activated by GTP, when glutamine is the substrate; GTP has no effect on the reaction when ammonia is the substrate. The allosteric effector GTP functions by stabilizing the protein conformation that binds the tetrahedral intermediate(s) formed during glutamine hydrolysis. Inhibited by the product CTP, via allosteric rather than competitive inhibition. In terms of biological role, catalyzes the ATP-dependent amination of UTP to CTP with either L-glutamine or ammonia as the source of nitrogen. Regulates intracellular CTP levels through interactions with the four ribonucleotide triphosphates. This chain is CTP synthase, found in Mycobacterium ulcerans (strain Agy99).